The chain runs to 413 residues: Palmitoyl-acyl carrier protein thioesterase, chloroplastic (413 aa).

The N-terminal 57 residues, 1 to 57 (MVATAVTSAFFPVTSSPDSSDSKNKKLGSIKSKPSVSSGSLQVKANAQAPPKINGTV), are a transit peptide targeting the chloroplast. Residues 12-79 (PVTSSPDSSD…DGASSPPPRT (68 aa)) form a disordered region. Low complexity predominate over residues 29–40 (SIKSKPSVSSGS). Catalysis depends on residues Asn310, His312, and Cys347. Positions 394 to 413 (WRPKHAKSSANMDQITAKRA) are disordered.

It belongs to the acyl-ACP thioesterase family.

Its subcellular location is the plastid. It localises to the chloroplast. The enzyme catalyses hexadecanoyl-[ACP] + H2O = hexadecanoate + holo-[ACP] + H(+). In terms of biological role, plays an essential role in chain termination during de novo fatty acid synthesis. High thioesterase activity for palmitoyl-ACP versus other acyl-ACPs. This is Palmitoyl-acyl carrier protein thioesterase, chloroplastic (FATB1) from Gossypium hirsutum (Upland cotton).